Consider the following 489-residue polypeptide: Aklavinone 12-hydroxylase DnrF (489 aa).

FAD contacts are provided by residues 17–18 (LG), Glu-37, Gln-121, and Leu-145. Tyr-224 serves as the catalytic Proton acceptor. Asp-308 is a binding site for FAD. Gly-317 lines the aklavinone pocket. Disordered stretches follow at residues 402–428 (VAAEDDDPEPTEDPRRPSGRPGFRAPH) and 455–489 (EGGAWPGRPPAPPRIWASASTSISSAAMSPPPPAN). A compositionally biased stretch (low complexity) spans 468–482 (RIWASASTSISSAAM).

The protein belongs to the PheA/TfdB FAD monooxygenase family. In terms of assembly, monomer. FAD serves as cofactor.

The enzyme catalyses aklavinone + NADPH + O2 + H(+) = epsilon-rhodomycinone + NADP(+) + H2O. It functions in the pathway antibiotic biosynthesis; daunorubicin biosynthesis. The protein operates within antibiotic biosynthesis; carminomycin biosynthesis. Its pathway is antibiotic biosynthesis; rhodomycin biosynthesis. In terms of biological role, involved in the biosynthesis of the anthracyclines carminomycin, rhodomycin and daunorubicin (daunomycin) which are aromatic polyketide antibiotics that exhibit high cytotoxicity and are widely applied in the chemotherapy of a variety of cancers. Catalyzes the incorporation of a hydroxyl group at position C-11 of aklavinone, resulting in epsilon-rhodomycinone. It cannot accept substrates glycosylated at position C-7. It can also hydroxylate 11-deoxycarminomycinone and can use both NAD or NADP. This Streptomyces peucetius protein is Aklavinone 12-hydroxylase DnrF (dnrF).